Here is a 1036-residue protein sequence, read N- to C-terminus: Multiple C2 domain and transmembrane region protein 2 (1036 aa).

The region spanning Met-1–Phe-110 is the C2 1 domain. Disordered stretches follow at residues Asp-137–Lys-204 and Arg-225–Asn-246. Residues Pro-146–Ala-155 are compositionally biased toward polar residues. Residues Thr-158–Glu-168 show a composition bias toward acidic residues. Residues Val-190–Lys-204 show a composition bias toward basic and acidic residues. C2 domains are found at residues Pro-277–Tyr-399, Val-440–Phe-563, and Tyr-607–Phe-734. Ca(2+) is bound by residues Asp-316, Asp-364, Glu-366, and Asp-372. The next 2 helical transmembrane spans lie at Phe-871–Ile-891 and Leu-979–Ile-999.

Belongs to the MCTP family. The cofactor is Ca(2+). Expressed in the vascular tissues of roots and rosette leaves. Accumulates in roots meristems. Observed in flowers.

It is found in the cell membrane. Its function is as follows. May function as a signaling molecule by regulating the trafficking of other regulators. The sequence is that of Multiple C2 domain and transmembrane region protein 2 from Arabidopsis thaliana (Mouse-ear cress).